Here is a 2543-residue protein sequence, read N- to C-terminus: Highly reducing polyketide synthase PKS2 (2543 aa).

Residues E4–G425 enclose the Ketosynthase family 3 (KS3) domain. Residues C174, H309, and H349 each act as for beta-ketoacyl synthase activity in the active site. Residues V573–T902 form a malonyl-CoA:ACP transacylase (MAT) domain region. S662 acts as the For malonyltransferase activity in catalysis. Residues H969–M1101 are N-terminal hotdog fold. The PKS/mFAS DH domain maps to H969–V1281. The dehydratase (DH) domain stretch occupies residues H969 to D1283. The Proton acceptor; for dehydratase activity role is filled by H1001. A C-terminal hotdog fold region spans residues T1119–V1281. D1188 (proton donor; for dehydratase activity) is an active-site residue. Residues S1438 to P1631 are methyltransferase (CMet) domain. The interval G1847 to I2159 is enoylreductase (ER) domain. The interval A2184–V2359 is ketoreductase (KR) domain. In terms of domain architecture, Carrier spans D2463 to R2540. O-(pantetheine 4'-phosphoryl)serine is present on S2500.

The protein operates within secondary metabolite biosynthesis. Its function is as follows. Highly reducing polyketide synthase; part of the gene cluster that mediates the biosynthesis of phomenoic acid, a long chain aliphatic carboxylic acid that does not appear to be essential for pathogenicity but may play a role in allowing to outcompete other fungi in the environmental niche via its antifungal properties. The polyketide synthase produces the long methylated aliphatic carboxylic acid chain of phomenoic acid. The cluster-specific cytochrome P450 monooxygenase may then hydroxylate the methyl group of carbon 31. The putative dehydrogenase YogA, which has no obvious role in phomenoic acid biosynthesis, may further modify phomenoic acid to produce a compound not identified yet. The sequence is that of Highly reducing polyketide synthase PKS2 from Leptosphaeria maculans (strain JN3 / isolate v23.1.3 / race Av1-4-5-6-7-8) (Blackleg fungus).